Reading from the N-terminus, the 81-residue chain is Large ribosomal subunit protein bL31B (81 aa).

Belongs to the bacterial ribosomal protein bL31 family. Type B subfamily. Part of the 50S ribosomal subunit.

This Exiguobacterium sibiricum (strain DSM 17290 / CCUG 55495 / CIP 109462 / JCM 13490 / 255-15) protein is Large ribosomal subunit protein bL31B.